The chain runs to 310 residues: L-lactate dehydrogenase (310 aa).

NAD(+) contacts are provided by residues Val-11, Asp-32, Tyr-62, and 76 to 77 (GV). Substrate contacts are provided by residues Gln-79, Arg-85, and 117 to 120 (NPVD). NAD(+)-binding positions include 115-117 (ATN) and Ser-140. Residue 145–148 (DTAR) coordinates substrate. Arg-150 and His-165 together coordinate beta-D-fructose 1,6-bisphosphate. The Proton acceptor role is filled by His-172. Tyr-218 is modified (phosphotyrosine). Position 227 (Thr-227) interacts with substrate.

The protein belongs to the LDH/MDH superfamily. LDH family. In terms of assembly, homotetramer.

It localises to the cytoplasm. It carries out the reaction (S)-lactate + NAD(+) = pyruvate + NADH + H(+). It participates in fermentation; pyruvate fermentation to lactate; (S)-lactate from pyruvate: step 1/1. With respect to regulation, allosterically activated by fructose 1,6-bisphosphate (FBP). Functionally, catalyzes the conversion of lactate to pyruvate. This Thermus thermophilus (strain ATCC BAA-163 / DSM 7039 / HB27) protein is L-lactate dehydrogenase.